Consider the following 161-residue polypeptide: Small ribosomal subunit protein uS8m (161 aa).

This sequence belongs to the universal ribosomal protein uS8 family. In terms of assembly, component of the mitochondrial small ribosomal subunit (mt-SSU). Mature N.crassa 74S mitochondrial ribosomes consist of a small (37S) and a large (54S) subunit. The 37S small subunit contains a 16S ribosomal RNA (16S mt-rRNA) and 32 different proteins. The 54S large subunit contains a 23S rRNA (23S mt-rRNA) and 42 different proteins.

It is found in the mitochondrion. Functionally, component of the mitochondrial ribosome (mitoribosome), a dedicated translation machinery responsible for the synthesis of mitochondrial genome-encoded proteins, including at least some of the essential transmembrane subunits of the mitochondrial respiratory chain. The mitoribosomes are attached to the mitochondrial inner membrane and translation products are cotranslationally integrated into the membrane. The sequence is that of Small ribosomal subunit protein uS8m (mrps8) from Neurospora crassa (strain ATCC 24698 / 74-OR23-1A / CBS 708.71 / DSM 1257 / FGSC 987).